The sequence spans 638 residues: Zinc finger protein 143 (638 aa).

N-acetylmethionine is present on Met1. A Glycyl lysine isopeptide (Lys-Gly) (interchain with G-Cter in SUMO2) cross-link involves residue Lys213. 4 consecutive C2H2-type zinc fingers follow at residues 237–261, 267–291, 297–321, and 327–351; these read FRCEYDGCGKLYTTAHHLKVHERSH, YQCEHAGCGKAFATGYGLKSHVRTH, YRCSEDNCTKSFKTSGDLQKHIRTH, and FKCPFEGCGRSFTTSNIRKVHVRTH. Thr352 is subject to Phosphothreonine. 3 C2H2-type zinc fingers span residues 357–381, 387–411, and 417–440; these read YYCTEPGCGRAFASATNYKNHVRIH, YVCTVPGCDKRFTEYSSLYKHHVVH, and YNCNHCGKTYKQISTLAMHKRTAH. Lys406 is covalently cross-linked (Glycyl lysine isopeptide (Lys-Gly) (interchain with G-Cter in SUMO2)).

This sequence belongs to the GLI C2H2-type zinc-finger protein family. As to quaternary structure, interacts with CHD8. Forms a complex with HCFC1 and ZNF143. As to expression, expressed in all tissues tested, with the strongest expression in ovary.

The protein resides in the nucleus. Its function is as follows. Transcriptional activator. Activates the gene for selenocysteine tRNA (tRNAsec). Binds to the SPH motif of small nuclear RNA (snRNA) gene promoters. Participates in efficient U6 RNA polymerase III transcription via its interaction with CHD8. In complex with HCFC1 and ZNF143, regulates the expression of several genes, including AP2S1, ESCO2, OPHN1, RBL1, UBXN8 and ZNF32. The polypeptide is Zinc finger protein 143 (ZNF143) (Homo sapiens (Human)).